Reading from the N-terminus, the 507-residue chain is Cobyric acid synthase (507 aa).

One can recognise a GATase cobBQ-type domain in the interval 251–448 (DIDIAVVHLP…LHGLFDSDAF (198 aa)). Cys-332 (nucleophile) is an active-site residue. His-440 is an active-site residue.

Belongs to the CobB/CobQ family. CobQ subfamily.

Its pathway is cofactor biosynthesis; adenosylcobalamin biosynthesis. In terms of biological role, catalyzes amidations at positions B, D, E, and G on adenosylcobyrinic A,C-diamide. NH(2) groups are provided by glutamine, and one molecule of ATP is hydrogenolyzed for each amidation. The polypeptide is Cobyric acid synthase (Klebsiella pneumoniae subsp. pneumoniae (strain ATCC 700721 / MGH 78578)).